The primary structure comprises 407 residues: Peptidase T (407 aa).

Histidine 77 lines the Zn(2+) pocket. Aspartate 79 is a catalytic residue. Aspartate 138 serves as a coordination point for Zn(2+). The active-site Proton acceptor is glutamate 172. Residues glutamate 173, aspartate 195, and histidine 377 each coordinate Zn(2+).

It belongs to the peptidase M20B family. Zn(2+) serves as cofactor.

Its subcellular location is the cytoplasm. The catalysed reaction is Release of the N-terminal residue from a tripeptide.. Its function is as follows. Cleaves the N-terminal amino acid of tripeptides. The polypeptide is Peptidase T (Aeromonas hydrophila subsp. hydrophila (strain ATCC 7966 / DSM 30187 / BCRC 13018 / CCUG 14551 / JCM 1027 / KCTC 2358 / NCIMB 9240 / NCTC 8049)).